A 252-amino-acid polypeptide reads, in one-letter code: Trans-aconitate 2-methyltransferase (252 aa).

It belongs to the methyltransferase superfamily. Tam family.

The protein localises to the cytoplasm. It catalyses the reaction trans-aconitate + S-adenosyl-L-methionine = (E)-3-(methoxycarbonyl)pent-2-enedioate + S-adenosyl-L-homocysteine. In terms of biological role, catalyzes the S-adenosylmethionine monomethyl esterification of trans-aconitate. The chain is Trans-aconitate 2-methyltransferase from Escherichia coli O139:H28 (strain E24377A / ETEC).